We begin with the raw amino-acid sequence, 496 residues long: MPKAKYVLALDQGTTGTHVSILDTKLQVVGRSYKEFTQHFPKPSWVEHDLDEIWASSEWCIARALKSAGLRGKDIAAIGITNQRETTGLWMRGSGQPLSHAIVWQDRRTAEQCRRLKEQGVEPRVREVTGLVVDPYFSGTKLTWMFDHLKGARAKAEKGDVCFGTIDTWLVYKLTGGAAHVTDVSNASRTLLMDLTTLQWSDEMRAMLSVPAACLPQIRGSAEVYGTTRGMRSLPDGIPVAGMAGDQQAALFGQACFEPGESKCTYGTGAFLLMNTGSEPVRSSAGLLTTVAWRLGGTGTTTYALEGSSFIAGAAVQWMRDGLKVIKRAPDIEALAASVKDSGDVVFVPALAGLGAPHWRPEARGLFAGIDRSTTVAHMARAVLEGIALQIHDLAEAMRRDSGRDIPVFKADGGAAANNLLMQFQADVLGVPLVRPRNLETTSLGAAFLGGLGAGIWDSPEAIRRAWKAEKTFKPKMKPDARERHLAKWKRAVERA.

Residue T14 coordinates ADP. Residues T14 and T15 each contribute to the ATP site. T14 provides a ligand contact to sn-glycerol 3-phosphate. Sn-glycerol 3-phosphate contacts are provided by R84, E85, Y136, and D246. Glycerol contacts are provided by R84, E85, Y136, D246, and Q247. Residues T268 and G313 each coordinate ADP. T268, G313, Q317, and G414 together coordinate ATP. Residues G414 and N418 each contribute to the ADP site.

It belongs to the FGGY kinase family.

The catalysed reaction is glycerol + ATP = sn-glycerol 3-phosphate + ADP + H(+). The protein operates within polyol metabolism; glycerol degradation via glycerol kinase pathway; sn-glycerol 3-phosphate from glycerol: step 1/1. With respect to regulation, inhibited by fructose 1,6-bisphosphate (FBP). Key enzyme in the regulation of glycerol uptake and metabolism. Catalyzes the phosphorylation of glycerol to yield sn-glycerol 3-phosphate. In Myxococcus xanthus (strain DK1622), this protein is Glycerol kinase.